A 476-amino-acid polypeptide reads, in one-letter code: Thymidine phosphorylase (476 aa).

Pro residues predominate over residues 1–11 (MAAPGTPPPLA). The disordered stretch occupies residues 1-26 (MAAPGTPPPLAPETAGADSGGGSGEH). Residues T6 and T475 each carry the phosphothreonine modification.

This sequence belongs to the thymidine/pyrimidine-nucleoside phosphorylase family. As to quaternary structure, homodimer.

The catalysed reaction is thymidine + phosphate = 2-deoxy-alpha-D-ribose 1-phosphate + thymine. It functions in the pathway pyrimidine metabolism; dTMP biosynthesis via salvage pathway; dTMP from thymine: step 1/2. Functionally, catalyzes the reversible phosphorolysis of thymidine. The produced molecules are then utilized as carbon and energy sources or in the rescue of pyrimidine bases for nucleotide synthesis. This chain is Thymidine phosphorylase (Tymp), found in Rattus norvegicus (Rat).